Consider the following 265-residue polypeptide: Membrane steroid-binding protein 2 (265 aa).

A helical membrane pass occupies residues 63-85 (WAAARSASPVAVIAAVAGAAVVY). Residues 94-116 (PPPPPARPREEPSEEAPPPPEPV) form a disordered region. One can recognise a Cytochrome b5 heme-binding domain in the interval 118–217 (VGEITAEELL…SKYVKVGTIK (100 aa)). Residues 120–217 (EITAEELLQY…SKYVKVGTIK (98 aa)) are steroid-binding.

It belongs to the cytochrome b5 family. MAPR subfamily.

The protein localises to the cell membrane. Binds multiple steroid compounds. The chain is Membrane steroid-binding protein 2 from Oryza sativa subsp. japonica (Rice).